The sequence spans 447 residues: Phosphoglucosamine mutase (447 aa).

Ser106 functions as the Phosphoserine intermediate in the catalytic mechanism. Mg(2+) contacts are provided by Ser106, Asp245, Asp247, and Asp249. Position 106 is a phosphoserine (Ser106).

The protein belongs to the phosphohexose mutase family. Mg(2+) serves as cofactor. Post-translationally, activated by phosphorylation.

The catalysed reaction is alpha-D-glucosamine 1-phosphate = D-glucosamine 6-phosphate. In terms of biological role, catalyzes the conversion of glucosamine-6-phosphate to glucosamine-1-phosphate. This is Phosphoglucosamine mutase from Cupriavidus metallidurans (strain ATCC 43123 / DSM 2839 / NBRC 102507 / CH34) (Ralstonia metallidurans).